A 430-amino-acid polypeptide reads, in one-letter code: NEDD8-activating enzyme E1 catalytic subunit (430 aa).

52–76 lines the ATP pocket; it reads GLGCELLKNLALSGFRTIEVIDMDT. Cysteine 211 acts as the Glycyl thioester intermediate in catalysis.

This sequence belongs to the ubiquitin-activating E1 family. UBA3 subfamily. Heterodimer of uba-3 and ula-1. Interacts with NEDD8 and ubc-12. In terms of tissue distribution, expressed in intestine, vulva epithelium and head and tail neurons.

Its subcellular location is the nucleus. It is found in the cytoplasm. It carries out the reaction ATP + [NEDD8 protein] + [E1 NEDD8-activating enzyme]-L-cysteine = AMP + diphosphate + [E1 NEDD8-activating enzyme]-S-[NEDD8 protein]-yl-L-cysteine.. It functions in the pathway protein modification; protein neddylation. In terms of biological role, catalytic subunit of the dimeric rfl-1 (uba-3)-ula-1 E1 enzyme. E1 activates NEDD8 by first adenylating its C-terminal glycine residue with ATP, thereafter linking this residue to the side chain of the catalytic cysteine, yielding a NEDD8-uba-3 thioester and free AMP. E1 finally transfers NEDD8 to the catalytic cysteine of ubc-12. Required for cytokinesis and mitotic spindle orientation during early embryogenesis. The chain is NEDD8-activating enzyme E1 catalytic subunit from Caenorhabditis elegans.